The sequence spans 516 residues: Flavonoid-6-hydroxylase (516 aa).

The helical transmembrane segment at 3-23 (FNAAVCAALAFISLLSYYLIW) threads the bilayer. Residue C455 coordinates heme.

This sequence belongs to the cytochrome P450 family. Heme serves as cofactor.

Its subcellular location is the membrane. The enzyme catalyses genkwanin + reduced [NADPH--hemoprotein reductase] + O2 = scutellarein 7-methyl ether + oxidized [NADPH--hemoprotein reductase] + H2O. It catalyses the reaction (2S)-sakuranetin + reduced [NADPH--hemoprotein reductase] + O2 = (2S)-7-methylcarthamidin + oxidized [NADPH--hemoprotein reductase] + H2O + H(+). It carries out the reaction apigenin 4',7-dimethyl ether + reduced [NADPH--hemoprotein reductase] + O2 = ladanein + oxidized [NADPH--hemoprotein reductase] + H2O + H(+). The catalysed reaction is (2S)-naringenin 4',7-dimethyl ether + reduced [NADPH--hemoprotein reductase] + O2 = (2S)-carthamidin-4',7-dimethyl ether + oxidized [NADPH--hemoprotein reductase] + H2O + H(+). It participates in flavonoid metabolism. 6-OH hydroxylase involved in the biosynthesis of polymethoxylated flavonoids natural products such as pebrellin, aroma compounds which contribute to the flavor of peppermint, and exhibit pharmacological activities such as anti-allergic, anti-oxidant, antibacterial, anti-proliferative, and anti-inflammatory effects. Catalyzes the 6-hydroxylation of 7-O-methylated precursors such as the conversion of genkwanin (GENK) to scutellarein-7-methyl ether (SCU7Me). Can also use apigenin-7,4'-dimethyl ether (AdM), naringenin-7-methyl ether (SAK) and naringenin-7,4'-dimethyl ether (NdM) as substrates. This chain is Flavonoid-6-hydroxylase, found in Mentha piperita (Peppermint).